We begin with the raw amino-acid sequence, 634 residues long: CREB-regulated transcription coactivator 1 (634 aa).

Ser-64 and Ser-113 each carry phosphoserine. Disordered stretches follow at residues 110–174, 191–221, 258–331, and 357–479; these read RLGS…GSQD, TTSE…VPGI, LPTP…TLSP, and QAGS…HTST. Position 149 is a phosphothreonine (Thr-149). Position 151 is a phosphoserine; by SIK1 and SIK2 (Ser-151). The segment covering 151–174 has biased composition (polar residues); sequence SDSALHQSTMTPTQPESFSSGSQD. Position 161 is a phosphothreonine (Thr-161). Residues 194-208 show a composition bias toward basic and acidic residues; the sequence is EADKNLSKQAWDTKK. A Nuclear export signal motif is present at residues 242–258; it reads TGGSLPDLTNIHFPSPL. 3 stretches are compositionally biased toward polar residues: residues 271-283, 296-305, and 314-331; these read ALSS…NLAA, GMSTPGSSPQ, and LSLS…TLSP. Residues 362–397 are compositionally biased toward pro residues; that stretch reads QPPPQPQPPPPPPPASQQPPPPPPPQAPVRLPPGGP. Polar residues predominate over residues 446–479; it reads QYRTSAGSPANQSPTSPVSNQGFSPGSSPQHTST.

Belongs to the TORC family. As to quaternary structure, binds, as a tetramer, through its N-terminal region, with the bZIP domain of CREB1. 'Arg-314' in the bZIP domain of CREB1 is essential for this interaction. Interaction, via its C-terminal, with TAF4, enhances recruitment of TAF4 to CREB1. Interacts with 14-3-3 proteins, including YWHAE/14-3-3 epsilon. Interacts with calmodulin-dependent catalytic subunit PPP3CA/calcineurin A. (Microbial infection) Interacts with HTLV1 Tax. Post-translationally, phosphorylation/dephosphorylation states of Ser-151 are required for regulating transduction of CREB activity. TORCs are inactive when phosphorylated, and active when dephosphorylated at this site. This primary site of phosphorylation is mediated by SIKs (SIK1 and SIK2), is regulated by cAMP and calcium levels and is dependent on the phosphorylation of SIKs by LKB1. Highly expressed in adult and fetal brain. Located to specific regions such as the prefrontal cortex and cerebellum. Very low expression in other tissues such as heart, spleen, lung, skeletal muscle, salivary gland, ovary and kidney.

The protein resides in the cytoplasm. The protein localises to the nucleus. Its function is as follows. Transcriptional coactivator for CREB1 which activates transcription through both consensus and variant cAMP response element (CRE) sites. Acts as a coactivator, in the SIK/TORC signaling pathway, being active when dephosphorylated and acts independently of CREB1 'Ser-133' phosphorylation. Enhances the interaction of CREB1 with TAF4. Regulates the expression of specific CREB-activated genes such as the steroidogenic gene, StAR. Potent coactivator of PGC1alpha and inducer of mitochondrial biogenesis in muscle cells. In the hippocampus, involved in late-phase long-term potentiation (L-LTP) maintenance at the Schaffer collateral-CA1 synapses. May be required for dendritic growth of developing cortical neurons. In concert with SIK1, regulates the light-induced entrainment of the circadian clock. In response to light stimulus, coactivates the CREB-mediated transcription of PER1 which plays an important role in the photic entrainment of the circadian clock. (Microbial infection) Plays a role of coactivator for TAX activation of the human T-cell leukemia virus type 1 (HTLV-1) long terminal repeats (LTR). This Homo sapiens (Human) protein is CREB-regulated transcription coactivator 1.